The sequence spans 881 residues: Tyrosine-protein kinase receptor TYRO3 (881 aa).

The N-terminal stretch at 1 to 28 (MVNPGPPGLIAGLLLAALSLSSVDGTKA) is a signal peptide. Ig-like C2-type domains follow at residues 29–114 (LGFV…KSVS) and 125–206 (PYFT…AIVE). Residues 29–414 (LGFVGHGYNM…QRHPHTRMSW (386 aa)) are Extracellular-facing. N37 and N49 each carry an N-linked (GlcNAc...) asparagine glycan. C50 and C103 form a disulfide bridge. N143 is a glycosylation site (N-linked (GlcNAc...) asparagine). C146 and C189 are disulfide-bonded. 2 Fibronectin type-III domains span residues 213–306 (PPFN…TKEK) and 311–401 (IPQN…SKEE). Residues N216, N279, N351, and N365 are each glycosylated (N-linked (GlcNAc...) asparagine). Residues 415-435 (VPMVLGILTALVTVVAMTLIF) form a helical membrane-spanning segment. The Cytoplasmic portion of the chain corresponds to 436 to 881 (LRKGRKETRF…MQEEQVVITL (446 aa)). The Protein kinase domain occupies 503–774 (FTLGRTLGKG…VDLKRRLEAI (272 aa)). ATP is bound by residues 509–517 (LGKGEFGSV) and K535. The Proton acceptor role is filled by D640. Y671 bears the Phosphotyrosine; by autocatalysis mark. The disordered stretch occupies residues 846-881 (EWSSSAQNGEARGLLHEEEEEEEEEEMQEEQVVITL). Positions 862-874 (EEEEEEEEEEMQE) are enriched in acidic residues.

This sequence belongs to the protein kinase superfamily. Tyr protein kinase family. AXL/UFO subfamily. Post-translationally, tyrosine phosphorylated upon receptor stimulation.

Its subcellular location is the cell membrane. The catalysed reaction is L-tyrosyl-[protein] + ATP = O-phospho-L-tyrosyl-[protein] + ADP + H(+). May be involved in cell adhesion processes, particularly in the central nervous system. The protein is Tyrosine-protein kinase receptor TYRO3 (tyro3) of Xenopus tropicalis (Western clawed frog).